The primary structure comprises 200 residues: Pyridoxal 5'-phosphate synthase subunit PdxT (200 aa).

Residue 52-54 coordinates L-glutamine; it reads GES. The active-site Nucleophile is Cys-84. L-glutamine-binding positions include Arg-116 and 145–146; that span reads IR. Residues His-181 and Glu-183 each act as charge relay system in the active site.

This sequence belongs to the glutaminase PdxT/SNO family. In the presence of PdxS, forms a dodecamer of heterodimers. Only shows activity in the heterodimer.

It catalyses the reaction aldehydo-D-ribose 5-phosphate + D-glyceraldehyde 3-phosphate + L-glutamine = pyridoxal 5'-phosphate + L-glutamate + phosphate + 3 H2O + H(+). The enzyme catalyses L-glutamine + H2O = L-glutamate + NH4(+). Its pathway is cofactor biosynthesis; pyridoxal 5'-phosphate biosynthesis. Catalyzes the hydrolysis of glutamine to glutamate and ammonia as part of the biosynthesis of pyridoxal 5'-phosphate. The resulting ammonia molecule is channeled to the active site of PdxS. This is Pyridoxal 5'-phosphate synthase subunit PdxT from Sulfolobus acidocaldarius (strain ATCC 33909 / DSM 639 / JCM 8929 / NBRC 15157 / NCIMB 11770).